The primary structure comprises 292 residues: NAD kinase (292 aa).

Asp73 functions as the Proton acceptor in the catalytic mechanism. Residues 73-74 (DG), 147-148 (NE), His158, Arg175, Asp177, 188-193 (TAYSLS), and Gln247 contribute to the NAD(+) site.

The protein belongs to the NAD kinase family. A divalent metal cation is required as a cofactor.

The protein localises to the cytoplasm. It catalyses the reaction NAD(+) + ATP = ADP + NADP(+) + H(+). Functionally, involved in the regulation of the intracellular balance of NAD and NADP, and is a key enzyme in the biosynthesis of NADP. Catalyzes specifically the phosphorylation on 2'-hydroxyl of the adenosine moiety of NAD to yield NADP. The protein is NAD kinase of Serratia proteamaculans (strain 568).